The following is a 378-amino-acid chain: Ribosomal RNA large subunit methyltransferase G (378 aa).

The protein belongs to the methyltransferase superfamily. RlmG family.

The protein resides in the cytoplasm. It carries out the reaction guanosine(1835) in 23S rRNA + S-adenosyl-L-methionine = N(2)-methylguanosine(1835) in 23S rRNA + S-adenosyl-L-homocysteine + H(+). Its function is as follows. Specifically methylates the guanine in position 1835 (m2G1835) of 23S rRNA. The chain is Ribosomal RNA large subunit methyltransferase G from Shigella dysenteriae serotype 1 (strain Sd197).